Reading from the N-terminus, the 119-residue chain is Large ribosomal subunit protein bL20 (119 aa).

Belongs to the bacterial ribosomal protein bL20 family.

In terms of biological role, binds directly to 23S ribosomal RNA and is necessary for the in vitro assembly process of the 50S ribosomal subunit. It is not involved in the protein synthesizing functions of that subunit. The chain is Large ribosomal subunit protein bL20 from Levilactobacillus brevis (strain ATCC 367 / BCRC 12310 / CIP 105137 / JCM 1170 / LMG 11437 / NCIMB 947 / NCTC 947) (Lactobacillus brevis).